The chain runs to 827 residues: Villin-1 (827 aa).

Residues 1-126 (MTKLNAQVKG…IRKGGVASGM (126 aa)) are necessary for homodimerization. The segment at 1–734 (MTKLNAQVKG…YEDLKAELGN (734 aa)) is core. Residues 28–107 (QMVPVSSSTY…EVQGNESEAF (80 aa)) form a Gelsolin-like 1 repeat. LPA/PIP2-binding site stretches follow at residues 112–119 (KQGIVIRK) and 138–146 (RLLHVKGKR). Gelsolin-like repeat units follow at residues 148-216 (VVAG…GEDE) and 269-342 (EVAT…SAVF). S366 bears the Phosphoserine mark. 3 Gelsolin-like repeats span residues 409-489 (DLVP…PHLM), 528-595 (TKAF…ANFW), and 634-707 (TEIP…PPTF). S735 is subject to Phosphoserine. An HP domain is found at 761-827 (SGPLPIFPLE…QNLKKEKGLF (67 aa)). The interval 816–824 (KQQNLKKEK) is LPA/PIP2-binding site 3.

The protein belongs to the villin/gelsolin family. Monomer. Homodimer; homodimerization is necessary for actin-bundling. Associates with F-actin; phosphorylation at tyrosine residues decreases the association with F-actin. Interacts (phosphorylated at C-terminus tyrosine phosphorylation sites) with PLCG1 (via the SH2 domains). Interacts (phosphorylated form) with PLCG1; the interaction is enhanced by hepatocyte growth factor (HGF). In terms of processing, phosphorylated on tyrosine residues by SRC. The unphosphorylated form increases the initial rate of actin-nucleating activity, whereas the tyrosine-phosphorylated form inhibits actin-nucleating activity, enhances actin-bundling activity and enhances actin-severing activity by reducing high Ca(2+) requirements. The tyrosine-phosphorylated form does not regulate actin-capping activity. Tyrosine phosphorylation is essential for cell migration: tyrosine phosphorylation sites in the N-terminus half regulate actin reorganization and cell morphology, whereas tyrosine phosphorylation sites in the C-terminus half regulate cell migration. Tyrosine phosphorylation is induced by epidermal growth factor (EGF) and stimulates cell migration.

Its subcellular location is the cytoplasm. The protein localises to the cytoskeleton. The protein resides in the cell projection. It is found in the lamellipodium. It localises to the ruffle. Its subcellular location is the microvillus. The protein localises to the filopodium tip. The protein resides in the filopodium. Functionally, epithelial cell-specific Ca(2+)-regulated actin-modifying protein that modulates the reorganization of microvillar actin filaments. Plays a role in the actin nucleation, actin filament bundle assembly, actin filament capping and severing. Binds phosphatidylinositol 4,5-bisphosphate (PIP2) and lysophosphatidic acid (LPA); binds LPA with higher affinity than PIP2. Binding to LPA increases its phosphorylation by SRC and inhibits all actin-modifying activities. Binding to PIP2 inhibits actin-capping and -severing activities but enhances actin-bundling activity. Regulates the intestinal epithelial cell morphology, cell invasion, cell migration and apoptosis. Protects against apoptosis induced by dextran sodium sulfate (DSS) in the gastrointestinal epithelium. Appears to regulate cell death by maintaining mitochondrial integrity. Enhances hepatocyte growth factor (HGF)-induced epithelial cell motility, chemotaxis and wound repair. This Sus scrofa (Pig) protein is Villin-1 (VIL1).